The primary structure comprises 165 residues: Large ribosomal subunit protein uL10 (165 aa).

Belongs to the universal ribosomal protein uL10 family. As to quaternary structure, part of the ribosomal stalk of the 50S ribosomal subunit. The N-terminus interacts with L11 and the large rRNA to form the base of the stalk. The C-terminus forms an elongated spine to which L12 dimers bind in a sequential fashion forming a multimeric L10(L12)X complex.

Functionally, forms part of the ribosomal stalk, playing a central role in the interaction of the ribosome with GTP-bound translation factors. In Buchnera aphidicola subsp. Schizaphis graminum (strain Sg), this protein is Large ribosomal subunit protein uL10.